Here is a 375-residue protein sequence, read N- to C-terminus: Chaperone protein DnaJ (375 aa).

The region spanning 5–70 (DYYEVLGVER…GKRSAYDQYG (66 aa)) is the J domain. A CR-type zinc finger spans residues 134-212 (GTTVTIRVPT…CHGQGRVEES (79 aa)). Zn(2+)-binding residues include C147, C150, C164, C167, C186, C189, C200, and C203. CXXCXGXG motif repeat units follow at residues 147 to 154 (CKTCDGTG), 164 to 171 (CTTCGGIG), 186 to 193 (CPRCHGSG), and 200 to 207 (CGSCHGQG).

This sequence belongs to the DnaJ family. As to quaternary structure, homodimer. The cofactor is Zn(2+).

The protein resides in the cytoplasm. Its function is as follows. Participates actively in the response to hyperosmotic and heat shock by preventing the aggregation of stress-denatured proteins and by disaggregating proteins, also in an autonomous, DnaK-independent fashion. Unfolded proteins bind initially to DnaJ; upon interaction with the DnaJ-bound protein, DnaK hydrolyzes its bound ATP, resulting in the formation of a stable complex. GrpE releases ADP from DnaK; ATP binding to DnaK triggers the release of the substrate protein, thus completing the reaction cycle. Several rounds of ATP-dependent interactions between DnaJ, DnaK and GrpE are required for fully efficient folding. Also involved, together with DnaK and GrpE, in the DNA replication of plasmids through activation of initiation proteins. The protein is Chaperone protein DnaJ of Ectopseudomonas mendocina (strain ymp) (Pseudomonas mendocina).